Reading from the N-terminus, the 404-residue chain is Cysteine desulfurase IscS (404 aa).

Residues A75–T76, N155, Q183, and S203–H205 each bind pyridoxal 5'-phosphate. The residue at position 206 (K206) is an N6-(pyridoxal phosphate)lysine. Pyridoxal 5'-phosphate is bound at residue T243. The active-site Cysteine persulfide intermediate is C328. C328 contributes to the [2Fe-2S] cluster binding site.

Belongs to the class-V pyridoxal-phosphate-dependent aminotransferase family. NifS/IscS subfamily. In terms of assembly, homodimer. Forms a heterotetramer with IscU, interacts with other sulfur acceptors. The cofactor is pyridoxal 5'-phosphate.

It localises to the cytoplasm. It carries out the reaction (sulfur carrier)-H + L-cysteine = (sulfur carrier)-SH + L-alanine. Its pathway is cofactor biosynthesis; iron-sulfur cluster biosynthesis. Master enzyme that delivers sulfur to a number of partners involved in Fe-S cluster assembly, tRNA modification or cofactor biosynthesis. Catalyzes the removal of elemental sulfur atoms from cysteine to produce alanine. Functions as a sulfur delivery protein for Fe-S cluster synthesis onto IscU, an Fe-S scaffold assembly protein, as well as other S acceptor proteins. This Neisseria meningitidis serogroup C (strain 053442) protein is Cysteine desulfurase IscS.